The sequence spans 358 residues: Protein-L-isoaspartate O-methyltransferase domain-containing protein 1 (358 aa).

The N-myristoyl glycine moiety is linked to residue Gly2. The active site involves Ser64. AdoMet binding motif stretches follow at residues Leu85–Leu94, Tyr160–Tyr164, and Leu181–Ile191. The interval Val240–Tyr250 is BC-box. A disordered region spans residues Pro300–Ile339. Residues Asp302–Asp318 show a composition bias toward acidic residues. Residues Lys319–Ile339 are compositionally biased toward basic and acidic residues. Residues Leu342 to Pro345 form a CUL-box region.

It belongs to the methyltransferase superfamily. L-isoaspartyl/D-aspartyl protein methyltransferase family. As to quaternary structure, component of the probable ECS(PCMTD1) E3 ubiquitin-protein ligase complex, at least composed of CUL5, ELOB, ELOC, RBX2 and PCMTD1.

Its subcellular location is the cytoplasm. It localises to the membrane. In terms of biological role, substrate recognition component of an ECS (Elongin BC-CUL5-SOCS-box protein) E3 ubiquitin ligase complex which mediates the ubiquitination and subsequent proteasomal degradation of target proteins. Specifically binds to the methyltransferase cofactor S-adenosylmethionine (AdoMet) via the N-terminal AdoMet binding motif, but does not display methyltransferase activity. May provide an alternate maintenance pathway for modified proteins by acting as a damage-specific E3 ubiquitin ligase adaptor protein. The sequence is that of Protein-L-isoaspartate O-methyltransferase domain-containing protein 1 (PCMTD1) from Gallus gallus (Chicken).